The primary structure comprises 161 residues: Ribosome maturation factor RimP (161 aa).

It belongs to the RimP family.

The protein resides in the cytoplasm. Its function is as follows. Required for maturation of 30S ribosomal subunits. This Pelobacter propionicus (strain DSM 2379 / NBRC 103807 / OttBd1) protein is Ribosome maturation factor RimP.